Here is a 366-residue protein sequence, read N- to C-terminus: Isocitrate dehydrogenase [NAD] subunit alpha, mitochondrial (366 aa).

The transit peptide at 1-27 directs the protein to the mitochondrion; it reads MAGPAWISKVSRLLGAFHNPKQVTRGF. Lysine 77 carries the N6-succinyllysine modification. At threonine 101 the chain carries Phosphothreonine. Substrate is bound by residues arginine 115, arginine 125, and arginine 146. Position 223 is an N6-acetyllysine (lysine 223). Residues aspartate 233, aspartate 257, and aspartate 261 each coordinate Mg(2+). Residue lysine 343 is modified to N6-acetyllysine; alternate. The residue at position 343 (lysine 343) is an N6-succinyllysine; alternate. The residue at position 350 (lysine 350) is an N6-succinyllysine.

This sequence belongs to the isocitrate and isopropylmalate dehydrogenases family. In terms of assembly, heterooligomer of subunits alpha (IDH3A), beta (IDH3B), and gamma (IDH3G) in the apparent ratio of 2:1:1. The heterodimer containing one IDH3A and one IDH3B subunit and the heterodimer containing one IDH3A and one IDH3G subunit assemble into a heterotetramer (which contains two subunits of IDH3A, one of IDH3B and one of IDH3G) and further into the heterooctamer. Requires Mg(2+) as cofactor. The cofactor is Mn(2+).

It is found in the mitochondrion. It carries out the reaction D-threo-isocitrate + NAD(+) = 2-oxoglutarate + CO2 + NADH. The heterotetramer and the heterodimer composed of IDH3A and IDH3G subunits can be allosterically activated by citrate (CIT) or/and ADP, and the two activators can act independently or synergistically. The heterodimer composed of IDH3A and IDH3B subunits cannot be allosterically regulated and the allosteric regulation of the heterotetramer is through the IDH3G subunit and not the IDH3B subunit. The IDH3G subunit contains the allosteric site which consists of a CIT-binding site and an ADP-binding site, and the binding of CIT and ADP causes conformational changes at the allosteric site which are transmitted to the active site in the catalytic subunit (IDH3A) through a cascade of conformational changes at the heterodimer interface, leading to stabilization of the isocitrate-binding at the active site and thus activation of the enzyme. ATP can activate the heterotetramer and the heterodimer composed of IDH3A and IDH3G subunits at low concentrations but inhibits their activities at high concentrations, whereas ATP exhibits only inhibitory effect on the heterodimer composed of IDH3A and IDH3B subunits. Functionally, catalytic subunit of the enzyme which catalyzes the decarboxylation of isocitrate (ICT) into alpha-ketoglutarate. The heterodimer composed of the alpha (IDH3A) and beta (IDH3B) subunits and the heterodimer composed of the alpha (IDH3A) and gamma (IDH3G) subunits, have considerable basal activity but the full activity of the heterotetramer (containing two subunits of IDH3A, one of IDH3B and one of IDH3G) requires the assembly and cooperative function of both heterodimers. The polypeptide is Isocitrate dehydrogenase [NAD] subunit alpha, mitochondrial (Homo sapiens (Human)).